Here is a 119-residue protein sequence, read N- to C-terminus: MIQENKNFATAKAKSIRVSPRKLNLVASFIRNMKVSEALIQLTFSPKRIAKIVKDCLRSAVANAENNLGLDIDRLIITKATVGKSVVMKRIMPRAKGRATRINKFFSNLDITVTEKEDN.

Belongs to the universal ribosomal protein uL22 family. As to quaternary structure, part of the 50S ribosomal subunit.

This protein binds specifically to 23S rRNA; its binding is stimulated by other ribosomal proteins, e.g. L4, L17, and L20. It is important during the early stages of 50S assembly. It makes multiple contacts with different domains of the 23S rRNA in the assembled 50S subunit and ribosome. In terms of biological role, the globular domain of the protein is located near the polypeptide exit tunnel on the outside of the subunit, while an extended beta-hairpin is found that lines the wall of the exit tunnel in the center of the 70S ribosome. This is Large ribosomal subunit protein uL22 from Rickettsia typhi (strain ATCC VR-144 / Wilmington).